Here is a 238-residue protein sequence, read N- to C-terminus: Orotidine 5'-phosphate decarboxylase (238 aa).

Substrate contacts are provided by residues Asp-10, Lys-32, 59 to 68 (DLKLHDIPNT), Thr-122, Arg-184, Gln-193, Gly-213, and Arg-214. Lys-61 acts as the Proton donor in catalysis.

This sequence belongs to the OMP decarboxylase family. Type 1 subfamily. In terms of assembly, homodimer.

It catalyses the reaction orotidine 5'-phosphate + H(+) = UMP + CO2. Its pathway is pyrimidine metabolism; UMP biosynthesis via de novo pathway; UMP from orotate: step 2/2. Catalyzes the decarboxylation of orotidine 5'-monophosphate (OMP) to uridine 5'-monophosphate (UMP). In Bacillus cytotoxicus (strain DSM 22905 / CIP 110041 / 391-98 / NVH 391-98), this protein is Orotidine 5'-phosphate decarboxylase.